We begin with the raw amino-acid sequence, 230 residues long: Ribonuclease 3 (230 aa).

Residues 5-125 enclose the RNase III domain; it reads YSRFYNILGY…VIGAIYLDSD (121 aa). Glu40 lines the Mg(2+) pocket. Asp44 is an active-site residue. Mg(2+) contacts are provided by Asp111 and Glu114. The active site involves Glu114. One can recognise a DRBM domain in the interval 153–223; the sequence is DSKSKLQEIL…AEKMIEMLSQ (71 aa).

It belongs to the ribonuclease III family. As to quaternary structure, homodimer. It depends on Mg(2+) as a cofactor.

It localises to the cytoplasm. It catalyses the reaction Endonucleolytic cleavage to 5'-phosphomonoester.. In terms of biological role, digests double-stranded RNA. Involved in the processing of primary rRNA transcript to yield the immediate precursors to the large and small rRNAs (23S and 16S). Processes some mRNAs, and tRNAs when they are encoded in the rRNA operon. Processes pre-crRNA and tracrRNA of type II CRISPR loci if present in the organism. This chain is Ribonuclease 3, found in Francisella tularensis subsp. tularensis (strain WY96-3418).